The sequence spans 1873 residues: MALEVESAFSLSYLLKENKQTSNNLFSLIQVPYTKMTHAKGKKTHLLRCILGSPFETLTKSSIRRSLKNLREVCNLPYCNFKKIPKNISYKYQNPFLKLYEINNNFINCKVGATGNTNSTYDWRNLSTIGNGWSVTSYHNDSVSRLHVSMVNNIPNSNTKKLSWWVTRVRSKNPWKRPYKVIYQRDFRDDGIKPYVSEFILYAPKNRADLEMQSILLSSVECFQDIKYALNYWTNLKFKEICNSALKRFTQTNIIITPVKPRVVSVNKAREVSSSVEVKLQRYEREGEVFVVSKAGKEDTRVLNDDNAIRNLFNATLNGGKYKLHPEAKSATGKRFKYYKDGFCWLDVFADANRRIPEWVKPHCLLTGSVLMSCGLWDFAKRKMVSVSHGLLHYDRKLERSSARAGVRDFVGASNEAVQREDFRDLDLRVEEFAERVLETANLRSDNRLIDNILTRASDYINKKSKESKELDINVCLSMDEKKMITNLFPDIQMSFNQKSYSNHGVFNAMRACENFYFSRKFKNSDYIDAGGDVVSTLRSKNHNVHICSPRLDLKDAARHIQRATVIDGLKGYGETISFCTNKTEDCAVNRDIIIAVEVYDMTLRDMAKAMLSHGSRKFEFSCIIPPEIFTKECNVELYEGRLKVTRIGDNVEYYYGSNGETFSHSCQTLKDILSVQVFQFGGRVFKKTLEHSRGQLHFFSICICEKIEPGSVKLKTYYQRSELDKVTLRIPVKDSFGVVTHYIIKEDREFVSSMIEYVANTGIKIDDKMVEWTYSQYRAKKTVTIKSGKVTQKETRIRKELIPGFIAIIMSEGIRAREKTHYLAKMLYTSHYKPSIVNIIFRLIMHFLGGTKRFIYESLVDCLKFLTNSDYIDTIVNTESRIEDLDKWFVFEQNVTITTDAEDQPSILEQSVKTFLSKYSEDVYERGDRSEFELEEFSSEQDLVDQLLNSGGGSKEDEWFYSYIFSIVRTKCTLSLAWRWTNRIFNFITSCRAKGKDFVKYIYEIIKIIINKPWEALCHYLVQGYKTVLKIPMTCVDSVNYLKRKSLEKILSYFSHERADDEYIFPGYDSDFSEESGDYGDENTELDSRSRCTVIKSKVEMLFRNIKGHIEKFLQRCGIIDQYNKIYHWFKSILTDVDCFNSVLNFITHTGCDALLAVLTGHFSIASCALKFMTDVVIEKNLSEKHHTTTKLIAGNLTQCIYKLDFIHPIWIPIRWGVKEISKIHIKKKLLNWRSTKEVTNESICKDLVHKSYIKYFDIKKAVWLLWFSLLIIFLHPTLGFFILFSIYPAIEIKRYYNNVVCFNNIKMSYPHVIDRLGGTYNFAKLKKAVREKFSENKSQGVKISEIPAEKDEDVMPPLEEVETPKRSVGRPSSKQDDIEDECNIKEDPTESLNFSNIEATSNRYDTLRVGNSKLCKFLRFYPKSKCYANIQTGDLIRDSIEEFYHLERSKLDIEISKMQRVVEIMNDTGRMLDNVRRMIDDRSMYVTLDGVSWYRLGCKDKNPAKEDFKAIFDHNFNIMEGNAKVKEFAVSSDEWRGMYSNERCRAIEQLFNDNNEMVRRPDVNGLKFYNKPPGAGKTTTIAKLMSKDLKNKVKCLALSYTKVGRLELIDKLKKDGIEKPEKYVKTYDSFLMNNDNILEIVNLYCDEVFMMHAGHFLTLLTKIAYQNGYCYGDVNQIPFINRDPYTPAYLSREFFRKQDLNYDTYTYRCPLDTCYLLSNLKDEMGNIIYAGGVKNVNEVYPTIRSLNLFGINVVGEVPVEYNAKYLTFTQDEKLNLQRHIDSQGGCRNAVSTVNEAQGCTFSEVNLVRLVQFDNPVMSDINQFVVAISRHTTTFKYFTPHSRLNDRVSNAISSLQSVSDFVLKDYHFRQCL.

Residues Cys344 and His393 each act as for leader protease activity in the active site. Residues 495–674 (SFNQKSYSNH…HSCQTLKDIL (180 aa)) form the Alphavirus-like MT domain. A disordered region spans residues 1356–1381 (VMPPLEEVETPKRSVGRPSSKQDDIE). The 168-residue stretch at 1538-1705 (RGMYSNERCR…FFRKQDLNYD (168 aa)) folds into the (+)RNA virus helicase ATP-binding domain. One can recognise a (+)RNA virus helicase C-terminal domain in the interval 1706-1873 (TYTYRCPLDT…LKDYHFRQCL (168 aa)).

It catalyses the reaction ATP + H2O = ADP + phosphate + H(+). This Beta vulgaris (Sugar beet) protein is Replicase polyprotein 1a.